The primary structure comprises 288 residues: Quinate/shikimate dehydrogenase (288 aa).

Lys71 and Asp107 together coordinate substrate. NAD(+) is bound by residues 132-135, 155-158, Lys205, 232-235, and Gly255; these read AGGA, NRRD, and CVYN.

This sequence belongs to the shikimate dehydrogenase family. As to quaternary structure, homodimer.

It carries out the reaction L-quinate + NAD(+) = 3-dehydroquinate + NADH + H(+). The enzyme catalyses L-quinate + NADP(+) = 3-dehydroquinate + NADPH + H(+). It catalyses the reaction shikimate + NADP(+) = 3-dehydroshikimate + NADPH + H(+). The catalysed reaction is shikimate + NAD(+) = 3-dehydroshikimate + NADH + H(+). Its pathway is metabolic intermediate biosynthesis; chorismate biosynthesis; chorismate from D-erythrose 4-phosphate and phosphoenolpyruvate: step 4/7. The actual biological function of YdiB remains unclear, nor is it known whether 3-dehydroshikimate or quinate represents the natural substrate. Catalyzes the reversible NAD-dependent reduction of both 3-dehydroshikimate (DHSA) and 3-dehydroquinate to yield shikimate (SA) and quinate, respectively. It can use both NAD or NADP for catalysis, however it has higher catalytic efficiency with NAD. This Escherichia coli (strain 55989 / EAEC) protein is Quinate/shikimate dehydrogenase.